Consider the following 266-residue polypeptide: Glucosamine-6-phosphate deaminase (266 aa).

Catalysis depends on Asp72, which acts as the Proton acceptor; for enolization step. Asp141 functions as the For ring-opening step in the catalytic mechanism. The active-site Proton acceptor; for ring-opening step is the His143. Catalysis depends on Glu148, which acts as the For ring-opening step.

It belongs to the glucosamine/galactosamine-6-phosphate isomerase family. NagB subfamily. In terms of assembly, homohexamer.

It catalyses the reaction alpha-D-glucosamine 6-phosphate + H2O = beta-D-fructose 6-phosphate + NH4(+). It participates in amino-sugar metabolism; N-acetylneuraminate degradation; D-fructose 6-phosphate from N-acetylneuraminate: step 5/5. With respect to regulation, allosterically activated by N-acetylglucosamine 6-phosphate (GlcNAc6P). Catalyzes the reversible isomerization-deamination of glucosamine 6-phosphate (GlcN6P) to form fructose 6-phosphate (Fru6P) and ammonium ion. The sequence is that of Glucosamine-6-phosphate deaminase from Salmonella arizonae (strain ATCC BAA-731 / CDC346-86 / RSK2980).